A 381-amino-acid chain; its full sequence is MQFFNTLHPTRPHWLLAALCLIASLLGAGTAQASRIKEVAAVEGVRSNQLTGFGLVVGLDGTGDQTTQMPYTAQGLTNYLQQLGITLPEAQVSKLQLKNVAAVLVTAALPAFARPGQAIDVNVSSMGNAKSLKGGTLITTPLKGADGEVYALAQGSLVVAGAGAAAGGSKVQINHLSAGRIPGGAQVERIVPTPLLEGASITLGLQASDFQTARRVAEAINRRFGAHSARALDGRTIDVTAPSESNARVSFIAEMEELQLESSIPSAKVVINSRTGSIVMNQAVTLGECAIAHGNLSVSISTTPVISQPNPLSTGGKTVVAEKSNIQIRQEPGMLIQLPKSTQLSDVVRALNALGATPQDLLAILQAIKAAGALNAELEVI.

A signal peptide spans 1 to 33 (MQFFNTLHPTRPHWLLAALCLIASLLGAGTAQA).

Belongs to the FlgI family. As to quaternary structure, the basal body constitutes a major portion of the flagellar organelle and consists of four rings (L,P,S, and M) mounted on a central rod.

It localises to the periplasm. Its subcellular location is the bacterial flagellum basal body. Its function is as follows. Assembles around the rod to form the L-ring and probably protects the motor/basal body from shearing forces during rotation. The protein is Flagellar P-ring protein of Albidiferax ferrireducens (strain ATCC BAA-621 / DSM 15236 / T118) (Rhodoferax ferrireducens).